The chain runs to 82 residues: uncharacterized protein (82 aa).

Transmembrane regions (helical) follow at residues 29–49 (LMNA…GIII) and 55–75 (WSLP…LTFF).

The protein resides in the cell membrane. This is an uncharacterized protein from Escherichia coli (strain K12).